The primary structure comprises 489 residues: Alpha-amylase (489 aa).

Residues 1-16 (HFKPILVLCLATLALG) form the signal peptide. Cys44 and Cys102 form a disulfide bridge. Positions 116, 164, and 173 each coordinate Ca(2+). Cysteines 152 and 166 form a disulfide. A chloride-binding site is contributed by Arg201. Asp203 (nucleophile) is an active-site residue. A Ca(2+)-binding site is contributed by His207. Glu240 (proton donor) is an active-site residue. Asn303 and Arg339 together coordinate chloride. Intrachain disulfides connect Cys372–Cys378 and Cys443–Cys455.

This sequence belongs to the glycosyl hydrolase 13 family. As to quaternary structure, monomer. It depends on Ca(2+) as a cofactor. The cofactor is chloride.

It catalyses the reaction Endohydrolysis of (1-&gt;4)-alpha-D-glucosidic linkages in polysaccharides containing three or more (1-&gt;4)-alpha-linked D-glucose units.. This chain is Alpha-amylase, found in Tribolium castaneum (Red flour beetle).